The chain runs to 536 residues: Phosphoenolpyruvate carboxykinase (ATP) (536 aa).

Substrate is bound by residues Arg-61, Tyr-195, and Lys-201. ATP contacts are provided by residues Lys-201, His-220, and 236 to 244; that span reads GLSGTGKTT. Mn(2+)-binding residues include Lys-201 and His-220. Asp-257 serves as a coordination point for Mn(2+). Glu-285, Arg-322, and Thr-447 together coordinate ATP. Substrate is bound at residue Arg-322.

This sequence belongs to the phosphoenolpyruvate carboxykinase (ATP) family. Mn(2+) is required as a cofactor.

The protein localises to the cytoplasm. The catalysed reaction is oxaloacetate + ATP = phosphoenolpyruvate + ADP + CO2. The protein operates within carbohydrate biosynthesis; gluconeogenesis. Functionally, involved in the gluconeogenesis. Catalyzes the conversion of oxaloacetate (OAA) to phosphoenolpyruvate (PEP) through direct phosphoryl transfer between the nucleoside triphosphate and OAA. The chain is Phosphoenolpyruvate carboxykinase (ATP) from Brucella melitensis biotype 1 (strain ATCC 23456 / CCUG 17765 / NCTC 10094 / 16M).